The chain runs to 363 residues: tRNA/tmRNA (uracil-C(5))-methyltransferase (363 aa).

S-adenosyl-L-methionine-binding residues include Q187, Y215, N220, E236, and D296. The Nucleophile role is filled by C321. The active-site Proton acceptor is the E355.

It belongs to the class I-like SAM-binding methyltransferase superfamily. RNA M5U methyltransferase family. TrmA subfamily.

It carries out the reaction uridine(54) in tRNA + S-adenosyl-L-methionine = 5-methyluridine(54) in tRNA + S-adenosyl-L-homocysteine + H(+). The catalysed reaction is uridine(341) in tmRNA + S-adenosyl-L-methionine = 5-methyluridine(341) in tmRNA + S-adenosyl-L-homocysteine + H(+). In terms of biological role, dual-specificity methyltransferase that catalyzes the formation of 5-methyluridine at position 54 (m5U54) in all tRNAs, and that of position 341 (m5U341) in tmRNA (transfer-mRNA). This is tRNA/tmRNA (uracil-C(5))-methyltransferase from Pseudomonas aeruginosa (strain UCBPP-PA14).